The primary structure comprises 1028 residues: Unconventional myosin-Ic (1028 aa).

At M1 the chain carries N-acetylmethionine. The 685-residue stretch at 12–696 (GVQDFVLLEN…TLFATEDALE (685 aa)) folds into the Myosin motor domain. ATP is bound by residues N53, Y61, 104–113 (SGESGAGKTE), and 157–161 (NDNSS). N6-methyllysine is present on K348. An actin-binding region spans residues 573–595 (LSKLMEILMSKEPSYIRCIKPND). 2 consecutive IQ domains span residues 699–728 (KQSL…SAIA) and 722–751 (MKHS…AVQT). One can recognise a TH1 domain in the interval 850-1024 (KDNYPQSVPR…NGHLTVVAPR (175 aa)).

Belongs to the TRAFAC class myosin-kinesin ATPase superfamily. Myosin family. Interacts (via its IQ motifs) with CALM.

It is found in the cytoplasm. Its subcellular location is the cell cortex. The protein localises to the cell projection. It localises to the ruffle membrane. The protein resides in the cytoplasmic vesicle. It is found in the stereocilium membrane. Myosins are actin-based motor molecules with ATPase activity. Unconventional myosins serve in intracellular movements. Their highly divergent tails are presumed to bind to membranous compartments, which would be moved relative to actin filaments. This chain is Unconventional myosin-Ic (MYO1C), found in Gallus gallus (Chicken).